The sequence spans 117 residues: MALYEHIFIVRPDVSPAQMESLLEETKALIEEKGGKTGKIEYWGLRNLSYRINKSRKGHYGLIDIDAEADVINELERLQRLSEDVIRHMTLRVEAHTEEPSAILTKKDDRRGRRERN.

The segment at 97–117 (TEEPSAILTKKDDRRGRRERN) is disordered.

The protein belongs to the bacterial ribosomal protein bS6 family.

Functionally, binds together with bS18 to 16S ribosomal RNA. This Maricaulis maris (strain MCS10) (Caulobacter maris) protein is Small ribosomal subunit protein bS6.